Here is a 1347-residue protein sequence, read N- to C-terminus: Ubinuclein-2 (1347 aa).

Residues 1–134 (MAEPRRVAFI…ETVRLELVLK (134 aa)) are disordered. Serine 13 bears the Phosphoserine mark. 2 stretches are compositionally biased toward basic and acidic residues: residues 16–37 (RRRE…EPPR) and 67–79 (SREK…EVSR). Residues 93–110 (PEPPPPFPPLPLQPPPPR) are compositionally biased toward pro residues. Residues 122 to 134 (PPRETVRLELVLK) are compositionally biased toward basic and acidic residues. Threonine 243 is subject to Phosphothreonine. Serine 250 is modified (phosphoserine). Residues 250–301 (SDTEEDDITDNQKHKPPKVPKIKEDDIEMKKRKRKEEGEKEKKPRKKVPKQL) are disordered. Phosphothreonine is present on threonine 252. Residue lysine 272 forms a Glycyl lysine isopeptide (Lys-Gly) (interchain with G-Cter in SUMO2) linkage. 5 positions are modified to phosphoserine: serine 311, serine 416, serine 419, serine 422, and serine 584. 6 disordered regions span residues 573–597 (LQTD…KRVI), 707–740 (ECSP…AAAS), 815–849 (LATP…DLAH), 880–913 (GLQR…HALG), 981–1006 (RLPL…TVPS), and 1035–1218 (ASPK…SSVV). Residues 574–584 (QTDEEREKNGS) show a composition bias toward basic and acidic residues. Over residues 721 to 740 (VASVSGPPTSSSTAAIAAAS) the composition is skewed to low complexity. Positions 823–832 (STQTTHSSSL) are enriched in polar residues. Residues 880–911 (GLQRSSQIHTSSSSQTHVSSSSQAQIAASSHA) are compositionally biased toward low complexity. Residues 985-996 (STPSPGNGSQGS) are compositionally biased toward polar residues. The span at 1035-1045 (ASPKLAASPKP) shows a compositional bias: low complexity. A compositionally biased stretch (pro residues) spans 1046–1060 (ATSPKPLPSPKPSAS). Low complexity-rich tracts occupy residues 1061-1070 (PKPSLSAKPS) and 1077-1095 (SKSN…SSPN). Lysine 1068 carries the N6-acetyllysine modification. Polar residues-rich tracts occupy residues 1101–1164 (GSHS…NSLS) and 1174–1185 (RGSNLNSSGANR). Serine 1123 is modified (phosphoserine). Lysine 1148 carries the post-translational modification N6-acetyllysine.

This sequence belongs to the ubinuclein family. As to expression, expressed in several cell lines tested, including primary and transformed cell lines.

This chain is Ubinuclein-2 (UBN2), found in Homo sapiens (Human).